Here is a 309-residue protein sequence, read N- to C-terminus: Probable nitrogen assimilation transcriptional activator (309 aa).

In terms of domain architecture, HTH lysR-type spans 1 to 57 (MRLEQLQAALRVAETGSFQEAAQKVGCNQSTISRQVKGLEDELGIALFRRQGRMKLT). A DNA-binding region (H-T-H motif) is located at residues 18-37 (FQEAAQKVGCNQSTISRQVK).

The protein belongs to the LysR transcriptional regulatory family.

Seems to regulate utilization of fixed nitrogen by controlling the expression of a certain gene(s) involved in nitrogen metabolism. This chain is Probable nitrogen assimilation transcriptional activator (ntcB), found in Synechococcus elongatus (strain ATCC 33912 / PCC 7942 / FACHB-805) (Anacystis nidulans R2).